Here is a 313-residue protein sequence, read N- to C-terminus: 4-hydroxy-3-methylbut-2-enyl diphosphate reductase (313 aa).

C13 is a binding site for [4Fe-4S] cluster. Positions 41 and 75 each coordinate (2E)-4-hydroxy-3-methylbut-2-enyl diphosphate. Dimethylallyl diphosphate contacts are provided by H41 and H75. The isopentenyl diphosphate site is built by H41 and H75. C97 provides a ligand contact to [4Fe-4S] cluster. H125 is a (2E)-4-hydroxy-3-methylbut-2-enyl diphosphate binding site. Residue H125 coordinates dimethylallyl diphosphate. H125 contacts isopentenyl diphosphate. Catalysis depends on E127, which acts as the Proton donor. T168 serves as a coordination point for (2E)-4-hydroxy-3-methylbut-2-enyl diphosphate. Position 218 (C218) interacts with [4Fe-4S] cluster. The (2E)-4-hydroxy-3-methylbut-2-enyl diphosphate site is built by S246, S247, N248, and S295. Residues S246, S247, N248, and S295 each contribute to the dimethylallyl diphosphate site. Isopentenyl diphosphate-binding residues include S246, S247, N248, and S295.

The protein belongs to the IspH family. It depends on [4Fe-4S] cluster as a cofactor.

The catalysed reaction is isopentenyl diphosphate + 2 oxidized [2Fe-2S]-[ferredoxin] + H2O = (2E)-4-hydroxy-3-methylbut-2-enyl diphosphate + 2 reduced [2Fe-2S]-[ferredoxin] + 2 H(+). The enzyme catalyses dimethylallyl diphosphate + 2 oxidized [2Fe-2S]-[ferredoxin] + H2O = (2E)-4-hydroxy-3-methylbut-2-enyl diphosphate + 2 reduced [2Fe-2S]-[ferredoxin] + 2 H(+). The protein operates within isoprenoid biosynthesis; dimethylallyl diphosphate biosynthesis; dimethylallyl diphosphate from (2E)-4-hydroxy-3-methylbutenyl diphosphate: step 1/1. It participates in isoprenoid biosynthesis; isopentenyl diphosphate biosynthesis via DXP pathway; isopentenyl diphosphate from 1-deoxy-D-xylulose 5-phosphate: step 6/6. Catalyzes the conversion of 1-hydroxy-2-methyl-2-(E)-butenyl 4-diphosphate (HMBPP) into a mixture of isopentenyl diphosphate (IPP) and dimethylallyl diphosphate (DMAPP). Acts in the terminal step of the DOXP/MEP pathway for isoprenoid precursor biosynthesis. This chain is 4-hydroxy-3-methylbut-2-enyl diphosphate reductase, found in Chlorobium phaeovibrioides (strain DSM 265 / 1930) (Prosthecochloris vibrioformis (strain DSM 265)).